Consider the following 131-residue polypeptide: MSMSDPIADMLTRIRNAQSTNKVSVSMPSSKLKRAIAAVLKDEGYIDDFSVQDVDGKPQLNISLKYYAGRPVIEKIERVSRPGLRIYRGNQEIPVVMHGLGVTIVSTSKGVMTDRKARDAGVGGEVLCVVA.

This sequence belongs to the universal ribosomal protein uS8 family. Part of the 30S ribosomal subunit. Contacts proteins S5 and S12.

Functionally, one of the primary rRNA binding proteins, it binds directly to 16S rRNA central domain where it helps coordinate assembly of the platform of the 30S subunit. The polypeptide is Small ribosomal subunit protein uS8 (Methylobacillus flagellatus (strain ATCC 51484 / DSM 6875 / VKM B-1610 / KT)).